Here is an 835-residue protein sequence, read N- to C-terminus: Ribonucleoside-diphosphate reductase large subunit (835 aa).

Substrate is bound by residues Ser-222, 237 to 238 (SC), Gly-266, 447 to 451 (NLCCE), and 660 to 664 (PSASS). Cys-238 and Cys-464 are disulfide-bonded. Asn-447 (proton acceptor) is an active-site residue. Cys-449 acts as the Cysteine radical intermediate in catalysis. The Proton acceptor role is filled by Glu-451.

The protein belongs to the ribonucleoside diphosphate reductase large chain family. Heterotetramer composed of a homodimer of the large subunit (R1) and a homodimer of the small subunit (R2). Larger multisubunit protein complex are also active, composed of (R1)n(R2)n.

It catalyses the reaction a 2'-deoxyribonucleoside 5'-diphosphate + [thioredoxin]-disulfide + H2O = a ribonucleoside 5'-diphosphate + [thioredoxin]-dithiol. Ribonucleoside-diphosphate reductase holoenzyme provides the precursors necessary for viral DNA synthesis. Allows virus growth in non-dividing cells. Catalyzes the biosynthesis of deoxyribonucleotides from the corresponding ribonucleotides. This is Ribonucleoside-diphosphate reductase large subunit from Magallana gigas (Pacific oyster).